Reading from the N-terminus, the 234-residue chain is Peptidase E (234 aa).

Active-site charge relay system residues include Ser-120, Asp-135, and His-157.

It belongs to the peptidase S51 family.

The protein localises to the cytoplasm. It carries out the reaction Dipeptidase E catalyzes the hydrolysis of dipeptides Asp-|-Xaa. It does not act on peptides with N-terminal Glu, Asn or Gln, nor does it cleave isoaspartyl peptides.. Functionally, hydrolyzes dipeptides containing N-terminal aspartate residues. May play a role in allowing the cell to use peptide aspartate to spare carbon otherwise required for the synthesis of the aspartate family of amino acids. This is Peptidase E from Salmonella gallinarum (strain 287/91 / NCTC 13346).